Reading from the N-terminus, the 247-residue chain is Carboxy-S-adenosyl-L-methionine synthase (247 aa).

S-adenosyl-L-methionine contacts are provided by residues Tyr39, 64-66 (GCS), 89-90 (DN), 117-118 (DI), Asn132, and Arg199.

This sequence belongs to the class I-like SAM-binding methyltransferase superfamily. Cx-SAM synthase family. In terms of assembly, homodimer.

It catalyses the reaction prephenate + S-adenosyl-L-methionine = carboxy-S-adenosyl-L-methionine + 3-phenylpyruvate + H2O. Catalyzes the conversion of S-adenosyl-L-methionine (SAM) to carboxy-S-adenosyl-L-methionine (Cx-SAM). In Escherichia fergusonii (strain ATCC 35469 / DSM 13698 / CCUG 18766 / IAM 14443 / JCM 21226 / LMG 7866 / NBRC 102419 / NCTC 12128 / CDC 0568-73), this protein is Carboxy-S-adenosyl-L-methionine synthase.